We begin with the raw amino-acid sequence, 318 residues long: NAC domain-containing protein 68 (318 aa).

The NAC domain occupies leucine 21–lysine 175.

Expressed in stems, leaf blades and callus. Weakly expressed in developing flowers.

It is found in the nucleus. Probable transcription factor involved in stress response. This chain is NAC domain-containing protein 68, found in Oryza sativa subsp. japonica (Rice).